A 105-amino-acid chain; its full sequence is Small ribosomal subunit protein uS10 (105 aa).

This sequence belongs to the universal ribosomal protein uS10 family. In terms of assembly, part of the 30S ribosomal subunit.

In terms of biological role, involved in the binding of tRNA to the ribosomes. This Nitratidesulfovibrio vulgaris (strain DSM 19637 / Miyazaki F) (Desulfovibrio vulgaris) protein is Small ribosomal subunit protein uS10.